Here is a 369-residue protein sequence, read N- to C-terminus: Flagellar P-ring protein (369 aa).

An N-terminal signal peptide occupies residues 1–22 (MIKLKQLIAATLLLSAAFGAHA).

It belongs to the FlgI family. As to quaternary structure, the basal body constitutes a major portion of the flagellar organelle and consists of four rings (L,P,S, and M) mounted on a central rod.

Its subcellular location is the periplasm. The protein localises to the bacterial flagellum basal body. Assembles around the rod to form the L-ring and probably protects the motor/basal body from shearing forces during rotation. In Pseudomonas syringae pv. tomato (strain ATCC BAA-871 / DC3000), this protein is Flagellar P-ring protein.